A 183-amino-acid polypeptide reads, in one-letter code: Large ribosomal subunit protein bL25 (183 aa).

Belongs to the bacterial ribosomal protein bL25 family. CTC subfamily. In terms of assembly, part of the 50S ribosomal subunit; part of the 5S rRNA/L5/L18/L25 subcomplex. Contacts the 5S rRNA. Binds to the 5S rRNA independently of L5 and L18.

This is one of the proteins that binds to the 5S RNA in the ribosome where it forms part of the central protuberance. The chain is Large ribosomal subunit protein bL25 from Desulfotalea psychrophila (strain LSv54 / DSM 12343).